A 475-amino-acid chain; its full sequence is Mitochondrial adenyl nucleotide antiporter SLC25A24 (475 aa).

A regulatory N-terminal domain region spans residues 1 to 173 (MLRWLRAFVL…RFWKHSTGID (173 aa)). At 1 to 197 (MLRWLRAFVL…EKKSGQWWRQ (197 aa)) the chain is on the mitochondrial intermembrane side. EF-hand domains lie at 19 to 54 (EPPT…LGIP), 55 to 88 (LGQD…KDHE), 86 to 121 (DHEK…LGLH), and 122 to 157 (ISEK…NPVT). Residues Asp-32, Asn-34, Asp-36, Val-38, Glu-43, Asp-68, Asn-70, Asp-72, Lys-74, Glu-79, Asp-99, Asn-101, Asp-103, Lys-105, Glu-110, Asp-135, Asp-137, Thr-139, Thr-141, and Glu-146 each coordinate Ca(2+). A linker region region spans residues 159-168 (IEEIIRFWKH). The segment at 174–475 (IGDSLTIPDE…MKQTLGVAQK (302 aa)) is C-terminal transmembrane transporter domain. Solcar repeat units follow at residues 192–276 (GQWW…YKKL), 284–369 (LGTF…LKSY), and 381–469 (PGVM…MKQT). Residues 198–215 (LLAGGVAGAVSRTSTAPL) form a helical membrane-spanning segment. Residues 216–250 (DRLKVMMQVHGSKSMNIFGGFRQMVKEGGIRSLWR) lie on the Mitochondrial matrix side of the membrane. Residues 251–270 (GNGTNVIKIAPETAVKFWAY) traverse the membrane as a helical segment. Topologically, residues 271-293 (EQYKKLLTEEGQKLGTFERFISG) are mitochondrial intermembrane. The helical transmembrane segment at 294–307 (SMAGATAQTFIYPM) threads the bilayer. Over 308–343 (EVLKTRLAVAKTGQYSGIYGCAKKILKHEGFGAFYK) the chain is Mitochondrial matrix. At Lys-318 the chain carries N6-acetyllysine; alternate. An N6-succinyllysine; alternate modification is found at Lys-318. N6-acetyllysine is present on Lys-334. A helical membrane pass occupies residues 344–363 (GYIPNLLGIIPYAGIDLAVY). Topologically, residues 364–386 (ELLKSYWLDNFAKDSVNPGVMVL) are mitochondrial intermembrane. Residues 387–404 (LSCGALSSTCGQLASYPL) form a helical membrane-spanning segment. The Mitochondrial matrix segment spans residues 405-443 (ALVRTRMQAQATVEGAPQLSMVGLFQRIVSKEGVSGLYR). Lys-435 is modified (N6-acetyllysine; alternate). Position 435 is an N6-succinyllysine; alternate (Lys-435). Residues 444–463 (GITPNFMKVLPAVGISYVVY) traverse the membrane as a helical segment. Topologically, residues 464-475 (ENMKQTLGVAQK) are mitochondrial intermembrane.

The protein belongs to the mitochondrial carrier (TC 2.A.29) family. As to quaternary structure, monomer.

Its subcellular location is the mitochondrion inner membrane. The enzyme catalyses Mg(2+)(out) + phosphate(in) + ATP(out) = Mg(2+)(in) + phosphate(out) + ATP(in). It catalyses the reaction ADP(out) + phosphate(in) + H(+)(out) = ADP(in) + phosphate(out) + H(+)(in). The catalysed reaction is AMP(out) + phosphate(in) = AMP(in) + phosphate(out). It carries out the reaction phosphate(in) + ATP(out) + 2 H(+)(out) = phosphate(out) + ATP(in) + 2 H(+)(in). The enzyme catalyses dADP(in) + ADP(out) = dADP(out) + ADP(in). It catalyses the reaction Mg(2+)(in) + ADP(out) + ATP(in) + H(+)(out) = Mg(2+)(out) + ADP(in) + ATP(out) + H(+)(in). The catalysed reaction is ADP(out) + diphosphate(in) = ADP(in) + diphosphate(out). It carries out the reaction dAMP(in) + ADP(out) + H(+)(out) = dAMP(out) + ADP(in) + H(+)(in). The enzyme catalyses 3'-AMP(in) + ADP(out) + H(+)(out) = 3'-AMP(out) + ADP(in) + H(+)(in). It catalyses the reaction dAMP(out) + phosphate(in) = dAMP(in) + phosphate(out). The catalysed reaction is 3'-AMP(out) + phosphate(in) = 3'-AMP(in) + phosphate(out). It carries out the reaction dADP(out) + phosphate(in) + H(+)(out) = dADP(in) + phosphate(out) + H(+)(in). Its activity is regulated as follows. Activated by an increase in cytosolic calcium levels that induce a conformational change of the N-terminal regulatory domain, uncapping the channel and allowing transport. Inhibited by bathophenanthroline, mersalyl, p-hydroxymercuribenzoate, bromcresol purple and tannic acid. In terms of biological role, electroneutral antiporter that mediates the transport of adenyl nucleotides through the inner mitochondrial membrane. Originally identified as an ATP-magnesium/inorganic phosphate antiporter, it also acts as a broad specificity adenyl nucleotide antiporter. By regulating the mitochondrial matrix adenyl nucleotide pool could adapt to changing cellular energetic demands and indirectly regulate adenyl nucleotide-dependent metabolic pathways. In vitro, a low activity is also observed with guanyl and pyrimidine nucleotides. May play a role in protecting cells against oxidative stress-induced cell death, by buffering calcium levels in the mitochondrial matrix through the formation of calcium-phosphate precipitates. The protein is Mitochondrial adenyl nucleotide antiporter SLC25A24 of Mus musculus (Mouse).